The following is a 137-amino-acid chain: Large ribosomal subunit protein uL16c (137 aa).

It belongs to the universal ribosomal protein uL16 family. As to quaternary structure, part of the 50S ribosomal subunit.

Its subcellular location is the plastid. It localises to the chloroplast. The polypeptide is Large ribosomal subunit protein uL16c (Bigelowiella natans (Pedinomonas minutissima)).